The chain runs to 605 residues: Alpha-1,3-galactosidase A (605 aa).

The first 20 residues, 1–20 (MKKYLHILPACFLFYAAAHA), serve as a signal peptide directing secretion. PbH1 repeat units follow at residues 256–278 (SKNI…VSQY), 312–334 (KGKV…NVHG), 421–443 (TPEV…LVTT), 444–466 (PRKV…LIEA), 477–507 (VKDV…HPSN), and 517–547 (HQNI…LFRN).

It belongs to the glycosyl hydrolase 110 family. A subfamily.

The enzyme catalyses Hydrolysis of terminal, non-reducing branched (1-&gt;3)-alpha-D-galactosidic residues, producing free D-galactose.. It catalyses the reaction Hydrolysis of terminal, non-reducing alpha-D-galactose residues in alpha-D-galactosides, including galactose oligosaccharides, galactomannans and galactolipids.. Functionally, alpha-galactosidase that specifically removes branched alpha-1,3-linked galactose residues present in blood group B antigens. Has no activity toward linear alpha-1,3-linked galactose residues. This Bacteroides fragilis (strain ATCC 25285 / DSM 2151 / CCUG 4856 / JCM 11019 / LMG 10263 / NCTC 9343 / Onslow / VPI 2553 / EN-2) protein is Alpha-1,3-galactosidase A (glaA).